We begin with the raw amino-acid sequence, 257 residues long: Imidazole glycerol phosphate synthase subunit HisF (257 aa).

Active-site residues include Asp11 and Asp130.

The protein belongs to the HisA/HisF family. As to quaternary structure, heterodimer of HisH and HisF.

It localises to the cytoplasm. The enzyme catalyses 5-[(5-phospho-1-deoxy-D-ribulos-1-ylimino)methylamino]-1-(5-phospho-beta-D-ribosyl)imidazole-4-carboxamide + L-glutamine = D-erythro-1-(imidazol-4-yl)glycerol 3-phosphate + 5-amino-1-(5-phospho-beta-D-ribosyl)imidazole-4-carboxamide + L-glutamate + H(+). It functions in the pathway amino-acid biosynthesis; L-histidine biosynthesis; L-histidine from 5-phospho-alpha-D-ribose 1-diphosphate: step 5/9. IGPS catalyzes the conversion of PRFAR and glutamine to IGP, AICAR and glutamate. The HisF subunit catalyzes the cyclization activity that produces IGP and AICAR from PRFAR using the ammonia provided by the HisH subunit. This chain is Imidazole glycerol phosphate synthase subunit HisF, found in Shewanella sp. (strain ANA-3).